Reading from the N-terminus, the 204-residue chain is MLPAALHPDSLWRPLEQLVLPPIIRDWMADPDSLTRRLKRYGHFSVVPGLHAIALPRADERRLLSLPVRRAALIREVTLHLDDTPVVAARSVLPLTSLAGANRSLGHMGSRSLGLELYNRPICQRDQVWARLASTDQHHSLCWGRQSRFIKRGAPLLVAEYFLPALWEKLHVARCVQASWLHDKAYLYASIRGEPTDAVRLSRF.

Positions 75, 113, and 160 each coordinate substrate.

Belongs to the UbiC family.

It is found in the cytoplasm. The enzyme catalyses chorismate = 4-hydroxybenzoate + pyruvate. Its pathway is cofactor biosynthesis; ubiquinone biosynthesis. In terms of biological role, removes the pyruvyl group from chorismate, with concomitant aromatization of the ring, to provide 4-hydroxybenzoate (4HB) for the ubiquinone pathway. The chain is Probable chorismate pyruvate-lyase from Alcanivorax borkumensis (strain ATCC 700651 / DSM 11573 / NCIMB 13689 / SK2).